The sequence spans 1023 residues: MSKQPVISRFFKPIARKEVTSEKGVEKEKPVDLDEEKHNEPATTSRLMPKGFDAAAETVTDEVIEIEVEIEHESEPKIEIKNGTVTAENKSMDFAEKLNRIWNDKKRVISNNDNDDSDGENDTIVKKSKNNSNKLTPLDQQVKDLKLLHMDKILVIRVGYKYKCFAQDAEIVSKILHIMLIPGKLTIDESNPQDSNYRQFAYCSFPDIRLKVHLETLVHNNLKVAVVEQSETSAIKKNSNASSKNSVFERKISGVYTKATFGINSAFSSNRKNVLGQYNSIWIINFSEIDKINSSFFMISVNLNSGEIIYDTFECSTTSIENLETRIKYLNPIEVLTVSALPEKVKLRLHGSNSTILLKEKEDIDKEIMEEINKSTKGLNLSAELFELVPVLYKYLTEYNNEELLLISENYKPFASKKHMVLNAAAIESLGIFGEEGGKGSLFWLLDHTRTSFGSRKLREWILHPLLDKKEIEDRLDAVDCIIHEVSNIFFESLNKMLTNVPDLLRTINRIAYGTTSRKEIYYFLKQMKSFSDHFQLHSNYLNSQVVSNDGRIHKSSALLTNLLTEITSGLKEINIENILSMINVSSVMEKDTYKQVSEFFNLNYYDHAEEIIKIQGNINEVKNELAEELSSIRKILKRPHLNYKDEMDYLIEVRNTQTKGLPSDWIVVNRTKMISRYHTPTSRKLIEKLQYQKDILYQETQKEYFQFVKRIKNDYFALNKIINHIATYDCILALASTSQNMNYVRPVLTDESQFIDAKNARNPIIESLDINYVPNDVNLSHSAGKFLIITGPNMGGKSSYIRQVALLVILAQVGSYVPADFMKTSIFDKILTRIGAYDNLLKGQSTFKVELLEIQNIIKNKTENSLLLLDEVGRGTSTEDGKAISYSIVDYFINLPVCPLVLFTTHYPFLGSINSKILKSYYMDFVEQKKEGEDWPSIVFLYKLRSGITDSSFGLNVARLAQIDKDIINHAFSISEKIRQETETANTMNLPILLKHILSSNDLKPQQKIIEILNLQNDSQEL.

Residues 19–40 (VTSEKGVEKEKPVDLDEEKHNE) are compositionally biased toward basic and acidic residues. Disordered regions lie at residues 19–46 (VTSE…TTSR) and 108–135 (VISN…SNKL). The segment at 129 to 259 (KNNSNKLTPL…RKISGVYTKA (131 aa)) is mispair-binding domain. 792-799 (GPNMGGKS) contributes to the ATP binding site.

This sequence belongs to the DNA mismatch repair MutS family. MSH3 subfamily. In terms of assembly, heterodimer consisting of MSH2-MSH3 (MutS beta). Forms a ternary complex with MutL alpha (MLH1-PMS1).

It is found in the nucleus. Component of the post-replicative DNA mismatch repair system (MMR). Heterodimerizes with MSH2 to form MutS beta, which binds to DNA mismatches thereby initiating DNA repair. MSH3 provides substrate-binding and substrate specificity to the complex. When bound, the MutS beta heterodimer bends the DNA helix and shields approximately 20 base pairs. Acts mainly to repair insertion-deletion loops (IDLs) from 2 to 13 nucleotides in size, but can also repair base-base and single insertion-deletion mismatches that occur during replication. After mismatch binding, forms a ternary complex with the MutL alpha heterodimer, which is thought to be responsible for directing the downstream MMR events, including strand discrimination, excision, and resynthesis. ATP binding and hydrolysis play a pivotal role in mismatch repair functions. The sequence is that of DNA mismatch repair protein MSH3 (MSH3) from Vanderwaltozyma polyspora (strain ATCC 22028 / DSM 70294 / BCRC 21397 / CBS 2163 / NBRC 10782 / NRRL Y-8283 / UCD 57-17) (Kluyveromyces polysporus).